We begin with the raw amino-acid sequence, 335 residues long: Deoxyhypusine hydroxylase (335 aa).

HEAT-like PBS-type repeat units lie at residues 71 to 97 (LKHE…VAKD), 104 to 130 (CRHE…LRDN), 200 to 233 (LRYR…GLKD), 238 to 264 (FRHE…ALSN), and 271 to 298 (VRHE…FLND). The Fe cation site is built by H73, E74, H106, and E107. Fe cation-binding residues include H240, E241, H273, and E274.

Belongs to the deoxyhypusine hydroxylase family. Fe(2+) is required as a cofactor.

It localises to the cytoplasm. Its subcellular location is the nucleus. It catalyses the reaction [eIF5A protein]-deoxyhypusine + AH2 + O2 = [eIF5A protein]-hypusine + A + H2O. It functions in the pathway protein modification; eIF5A hypusination. Functionally, catalyzes the hydroxylation of the N(6)-(4-aminobutyl)-L-lysine intermediate to form hypusine, an essential post-translational modification only found in mature eIF-5A factor. The sequence is that of Deoxyhypusine hydroxylase (lia1) from Aspergillus fumigatus (strain ATCC MYA-4609 / CBS 101355 / FGSC A1100 / Af293) (Neosartorya fumigata).